A 172-amino-acid chain; its full sequence is Adenine phosphoribosyltransferase (172 aa).

The protein belongs to the purine/pyrimidine phosphoribosyltransferase family. In terms of assembly, homodimer.

The protein resides in the cytoplasm. It carries out the reaction AMP + diphosphate = 5-phospho-alpha-D-ribose 1-diphosphate + adenine. Its pathway is purine metabolism; AMP biosynthesis via salvage pathway; AMP from adenine: step 1/1. In terms of biological role, catalyzes a salvage reaction resulting in the formation of AMP, that is energically less costly than de novo synthesis. This Polynucleobacter asymbioticus (strain DSM 18221 / CIP 109841 / QLW-P1DMWA-1) (Polynucleobacter necessarius subsp. asymbioticus) protein is Adenine phosphoribosyltransferase.